Consider the following 201-residue polypeptide: Recombination protein RecR (201 aa).

Residues 60 to 75 (CSRCGNVDTVDPCTVC) form a C4-type zinc finger. One can recognise a Toprim domain in the interval 83 to 178 (SVIIVVEDVA…KITRLAHGVP (96 aa)).

It belongs to the RecR family.

May play a role in DNA repair. It seems to be involved in an RecBC-independent recombinational process of DNA repair. It may act with RecF and RecO. The polypeptide is Recombination protein RecR (Rhizobium rhizogenes (strain K84 / ATCC BAA-868) (Agrobacterium radiobacter)).